The following is a 197-amino-acid chain: Holliday junction branch migration complex subunit RuvA (197 aa).

The tract at residues 1–62 is domain I; the sequence is MIEFVRGEVA…EDQEVLFGFR (62 aa). The tract at residues 63 to 141 is domain II; it reads SRRERALFTK…ELAPDYIPSE (79 aa). The interval 141–145 is flexible linker; sequence EGLFA. The tract at residues 146–197 is domain III; it reads QGNAELNEACEALTALGYSEREVEKVKKALQGEVLSTDQYVKRALQLLLNVR.

The protein belongs to the RuvA family. Homotetramer. Forms an RuvA(8)-RuvB(12)-Holliday junction (HJ) complex. HJ DNA is sandwiched between 2 RuvA tetramers; dsDNA enters through RuvA and exits via RuvB. An RuvB hexamer assembles on each DNA strand where it exits the tetramer. Each RuvB hexamer is contacted by two RuvA subunits (via domain III) on 2 adjacent RuvB subunits; this complex drives branch migration. In the full resolvosome a probable DNA-RuvA(4)-RuvB(12)-RuvC(2) complex forms which resolves the HJ.

Its subcellular location is the cytoplasm. Its function is as follows. The RuvA-RuvB-RuvC complex processes Holliday junction (HJ) DNA during genetic recombination and DNA repair, while the RuvA-RuvB complex plays an important role in the rescue of blocked DNA replication forks via replication fork reversal (RFR). RuvA specifically binds to HJ cruciform DNA, conferring on it an open structure. The RuvB hexamer acts as an ATP-dependent pump, pulling dsDNA into and through the RuvAB complex. HJ branch migration allows RuvC to scan DNA until it finds its consensus sequence, where it cleaves and resolves the cruciform DNA. In Exiguobacterium sibiricum (strain DSM 17290 / CCUG 55495 / CIP 109462 / JCM 13490 / 255-15), this protein is Holliday junction branch migration complex subunit RuvA.